We begin with the raw amino-acid sequence, 118 residues long: NADH-ubiquinone oxidoreductase chain 3 (118 aa).

The next 3 membrane-spanning stretches (helical) occupy residues 7 to 27 (ICISLVISLLLSLILLVVPFL), 62 to 82 (LVSILFIIFDLEVTFFFPWAV), and 87 to 107 (IDLFGFWSMMAFLLILTIGFL).

Belongs to the complex I subunit 3 family.

The protein localises to the mitochondrion membrane. It carries out the reaction a ubiquinone + NADH + 5 H(+)(in) = a ubiquinol + NAD(+) + 4 H(+)(out). Its function is as follows. Core subunit of the mitochondrial membrane respiratory chain NADH dehydrogenase (Complex I) that is believed to belong to the minimal assembly required for catalysis. Complex I functions in the transfer of electrons from NADH to the respiratory chain. The immediate electron acceptor for the enzyme is believed to be ubiquinone. In Oenothera berteroana (Bertero's evening primrose), this protein is NADH-ubiquinone oxidoreductase chain 3 (ND3).